The chain runs to 199 residues: Imidazoleglycerol-phosphate dehydratase (199 aa).

It belongs to the imidazoleglycerol-phosphate dehydratase family.

It localises to the cytoplasm. The catalysed reaction is D-erythro-1-(imidazol-4-yl)glycerol 3-phosphate = 3-(imidazol-4-yl)-2-oxopropyl phosphate + H2O. It functions in the pathway amino-acid biosynthesis; L-histidine biosynthesis; L-histidine from 5-phospho-alpha-D-ribose 1-diphosphate: step 6/9. The polypeptide is Imidazoleglycerol-phosphate dehydratase (Desulfotalea psychrophila (strain LSv54 / DSM 12343)).